The sequence spans 86 residues: Elongation factor 1-beta (86 aa).

The protein belongs to the EF-1-beta/EF-1-delta family.

Promotes the exchange of GDP for GTP in EF-1-alpha/GDP, thus allowing the regeneration of EF-1-alpha/GTP that could then be used to form the ternary complex EF-1-alpha/GTP/AAtRNA. This Methanocorpusculum labreanum (strain ATCC 43576 / DSM 4855 / Z) protein is Elongation factor 1-beta.